Consider the following 452-residue polypeptide: Bifunctional protein GlmU (452 aa).

Positions 1-232 (MTARNSLTIV…EDEVRGINTK (232 aa)) are pyrophosphorylase. UDP-N-acetyl-alpha-D-glucosamine is bound by residues 11–14 (LAAG), K25, Q78, and 83–84 (GT). D108 contributes to the Mg(2+) binding site. Positions 144, 158, 173, and 230 each coordinate UDP-N-acetyl-alpha-D-glucosamine. Position 230 (N230) interacts with Mg(2+). The interval 233-253 (AQLAEAETVMQTRLRLAAMAA) is linker. The interval 254–452 (GVTLIAPETV…KSRHRKPKAH (199 aa)) is N-acetyltransferase. The UDP-N-acetyl-alpha-D-glucosamine site is built by R319 and K337. Residue H349 is the Proton acceptor of the active site. Y352 and N363 together coordinate UDP-N-acetyl-alpha-D-glucosamine. Acetyl-CoA contacts are provided by residues A366, 372–373 (NY), S391, S409, and R426.

This sequence in the N-terminal section; belongs to the N-acetylglucosamine-1-phosphate uridyltransferase family. In the C-terminal section; belongs to the transferase hexapeptide repeat family. As to quaternary structure, homotrimer. Requires Mg(2+) as cofactor.

It is found in the cytoplasm. It carries out the reaction alpha-D-glucosamine 1-phosphate + acetyl-CoA = N-acetyl-alpha-D-glucosamine 1-phosphate + CoA + H(+). The enzyme catalyses N-acetyl-alpha-D-glucosamine 1-phosphate + UTP + H(+) = UDP-N-acetyl-alpha-D-glucosamine + diphosphate. The protein operates within nucleotide-sugar biosynthesis; UDP-N-acetyl-alpha-D-glucosamine biosynthesis; N-acetyl-alpha-D-glucosamine 1-phosphate from alpha-D-glucosamine 6-phosphate (route II): step 2/2. It participates in nucleotide-sugar biosynthesis; UDP-N-acetyl-alpha-D-glucosamine biosynthesis; UDP-N-acetyl-alpha-D-glucosamine from N-acetyl-alpha-D-glucosamine 1-phosphate: step 1/1. Its pathway is bacterial outer membrane biogenesis; LPS lipid A biosynthesis. In terms of biological role, catalyzes the last two sequential reactions in the de novo biosynthetic pathway for UDP-N-acetylglucosamine (UDP-GlcNAc). The C-terminal domain catalyzes the transfer of acetyl group from acetyl coenzyme A to glucosamine-1-phosphate (GlcN-1-P) to produce N-acetylglucosamine-1-phosphate (GlcNAc-1-P), which is converted into UDP-GlcNAc by the transfer of uridine 5-monophosphate (from uridine 5-triphosphate), a reaction catalyzed by the N-terminal domain. This is Bifunctional protein GlmU from Rhodopseudomonas palustris (strain ATCC BAA-98 / CGA009).